The chain runs to 77 residues: Large ribosomal subunit protein eL14 (77 aa).

This sequence belongs to the eukaryotic ribosomal protein eL14 family.

In Methanococcus maripaludis (strain C5 / ATCC BAA-1333), this protein is Large ribosomal subunit protein eL14.